Here is a 278-residue protein sequence, read N- to C-terminus: Urease accessory protein UreD (278 aa).

This sequence belongs to the UreD family. As to quaternary structure, ureD, UreF and UreG form a complex that acts as a GTP-hydrolysis-dependent molecular chaperone, activating the urease apoprotein by helping to assemble the nickel containing metallocenter of UreC. The UreE protein probably delivers the nickel.

The protein localises to the cytoplasm. Required for maturation of urease via the functional incorporation of the urease nickel metallocenter. This is Urease accessory protein UreD from Leptothrix cholodnii (strain ATCC 51168 / LMG 8142 / SP-6) (Leptothrix discophora (strain SP-6)).